The primary structure comprises 155 residues: Cytochrome c-type biogenesis protein CcmE (155 aa).

At 1–8 (MNPVRKRR) the chain is on the cytoplasmic side. The chain crosses the membrane as a helical; Signal-anchor for type II membrane protein span at residues 9–29 (LFIVLAILAGVGAAVALALSA). Topologically, residues 30 to 155 (LQQNINLFYT…YENGKPGGAQ (126 aa)) are periplasmic. His-124 and Tyr-128 together coordinate heme.

It belongs to the CcmE/CycJ family.

It is found in the cell inner membrane. Its function is as follows. Heme chaperone required for the biogenesis of c-type cytochromes. Transiently binds heme delivered by CcmC and transfers the heme to apo-cytochromes in a process facilitated by CcmF and CcmH. The polypeptide is Cytochrome c-type biogenesis protein CcmE (Azotobacter vinelandii (strain DJ / ATCC BAA-1303)).